The following is a 348-amino-acid chain: GTPase Obg (348 aa).

The 159-residue stretch at 1–159 (MKFLDQAKIY…KTIILRLKLI (159 aa)) folds into the Obg domain. The OBG-type G domain occupies 160–327 (ADAGLVGLPN…VLRLAADEIW (168 aa)). GTP-binding positions include 166 to 173 (GLPNAGKS), 191 to 195 (FTTLT), 212 to 215 (DIPG), 279 to 282 (NKMD), and 308 to 310 (SGV). Ser173 and Thr193 together coordinate Mg(2+).

Belongs to the TRAFAC class OBG-HflX-like GTPase superfamily. OBG GTPase family. In terms of assembly, monomer. Requires Mg(2+) as cofactor.

It is found in the cytoplasm. In terms of biological role, an essential GTPase which binds GTP, GDP and possibly (p)ppGpp with moderate affinity, with high nucleotide exchange rates and a fairly low GTP hydrolysis rate. Plays a role in control of the cell cycle, stress response, ribosome biogenesis and in those bacteria that undergo differentiation, in morphogenesis control. This chain is GTPase Obg, found in Parvibaculum lavamentivorans (strain DS-1 / DSM 13023 / NCIMB 13966).